A 282-amino-acid polypeptide reads, in one-letter code: MKLLRYGPSGQEKPGILDADGRIRDLSAHVPDLAGDVLSDAALARLRAIDPATLPLVSGEPRIGACVGRVGKFIGIGLNYADHAAEAGMPVPKEPVVFGKWTSSICGPNDGIDIPKGSVKTDWEVELGVVIGTTCKDVDEARALDYVAGYCVVNDVSEREWQIERGGQWDKGKGFDTFGPIGPWLVTRDEVPDPQRVDLWLEIDGHRYQNGNTRTMVFTVAQLVAYLSTCMTLQPGDVITTGTPPGVGMGIKPSPVFLKAGQTVRLGIDGLGEQLQSTRNAQ.

Positions 124, 126, and 155 each coordinate Mg(2+).

This sequence belongs to the FAH family. Mg(2+) is required as a cofactor.

This chain is Putative hydrolase BamMC406_5393, found in Burkholderia ambifaria (strain MC40-6).